The chain runs to 275 residues: Myoblast determination protein 1 homolog 2 (275 aa).

A bHLH domain is found at 84–135; sequence DRRKAATMRERRRLGKVNDAFENLKRCTSNNPNQRLPKVEILRNAISYIESL. Residues 232 to 265 show a composition bias toward polar residues; it reads SGQEGSEGSPCSPQEGSILSRNGGTVPSPTNCPQ. The disordered stretch occupies residues 232–275; that stretch reads SGQEGSEGSPCSPQEGSILSRNGGTVPSPTNCPQPSHDPIYQVL.

In terms of assembly, efficient DNA binding requires dimerization with another bHLH protein.

It localises to the nucleus. Its function is as follows. May act as a transcriptional activator that promotes transcription of muscle-specific target genes and plays a role in muscle differentiation. This chain is Myoblast determination protein 1 homolog 2 (myod2), found in Oncorhynchus mykiss (Rainbow trout).